We begin with the raw amino-acid sequence, 441 residues long: Ribosomal protein uS12 methylthiotransferase RimO (441 aa).

The MTTase N-terminal domain occupies 8 to 118 (PKIGFVSLGC…VLEHVHHYVP (111 aa)). 6 residues coordinate [4Fe-4S] cluster: Cys-17, Cys-53, Cys-82, Cys-150, Cys-154, and Cys-157. The region spanning 136 to 373 (LTPRHYAYLK…MQLQQQISAE (238 aa)) is the Radical SAM core domain. Residues 376 to 441 (QEKVGREILV…DEYDLWGSRV (66 aa)) enclose the TRAM domain.

This sequence belongs to the methylthiotransferase family. RimO subfamily. It depends on [4Fe-4S] cluster as a cofactor.

The protein resides in the cytoplasm. It carries out the reaction L-aspartate(89)-[ribosomal protein uS12]-hydrogen + (sulfur carrier)-SH + AH2 + 2 S-adenosyl-L-methionine = 3-methylsulfanyl-L-aspartate(89)-[ribosomal protein uS12]-hydrogen + (sulfur carrier)-H + 5'-deoxyadenosine + L-methionine + A + S-adenosyl-L-homocysteine + 2 H(+). Catalyzes the methylthiolation of an aspartic acid residue of ribosomal protein uS12. The protein is Ribosomal protein uS12 methylthiotransferase RimO of Escherichia coli (strain SMS-3-5 / SECEC).